Here is a 143-residue protein sequence, read N- to C-terminus: ATP synthase subunit 9, mitochondrial (143 aa).

A mitochondrion-targeting transit peptide spans 1–62 (MAASRVFAQR…ARQAFAARRQ (62 aa)). Transmembrane regions (helical) follow at residues 85 to 105 (IGLGGAGIGIGVVFGSLLLAV) and 119 to 139 (AILGFAFVEAIGLFDLMVAMM).

It belongs to the ATPase C chain family. As to quaternary structure, F-type ATPases have 2 components, CF(1) - the catalytic core - and CF(0) - the membrane proton channel. CF(1) has five subunits: alpha(3), beta(3), gamma(1), delta(1), epsilon(1). CF(0) has three main subunits: a, b and c.

Its subcellular location is the mitochondrion membrane. In terms of biological role, mitochondrial membrane ATP synthase (F(1)F(0) ATP synthase or Complex V) produces ATP from ADP in the presence of a proton gradient across the membrane which is generated by electron transport complexes of the respiratory chain. F-type ATPases consist of two structural domains, F(1) - containing the extramembraneous catalytic core and F(0) - containing the membrane proton channel, linked together by a central stalk and a peripheral stalk. During catalysis, ATP synthesis in the catalytic domain of F(1) is coupled via a rotary mechanism of the central stalk subunits to proton translocation. Part of the complex F(0) domain. A homomeric c-ring of probably 10 subunits is part of the complex rotary element. The protein is ATP synthase subunit 9, mitochondrial (atp9) of Emericella nidulans (strain FGSC A4 / ATCC 38163 / CBS 112.46 / NRRL 194 / M139) (Aspergillus nidulans).